Here is a 480-residue protein sequence, read N- to C-terminus: Sporozoite surface protein P36p (480 aa).

The N-terminal stretch at 1 to 22 (MKRRSIFMYYCFCFLLKYVAFS) is a signal peptide. 6-Cys domains lie at 23–156 (NVPN…FKKM) and 159–298 (KIKG…TSKN). N-linked (GlcNAc...) asparagine glycans are attached at residues Asn-28, Asn-40, Asn-92, Asn-111, and Asn-184. Intrachain disulfides connect Cys-37-Cys-49, Cys-63-Cys-137, Cys-80-Cys-135, Cys-163-Cys-187, Cys-201-Cys-280, and Cys-221-Cys-278. 7 N-linked (GlcNAc...) asparagine glycosylation sites follow: Asn-294, Asn-368, Asn-375, Asn-392, Asn-405, Asn-409, and Asn-424. The segment at 358–415 (KMDSSDDDESNETESSENESNERTHNGNRANKDANNSEKMTGNRRKKNNSINNTNYYS) is disordered. Positions 362–376 (SDDDESNETESSENE) are enriched in acidic residues. Residues 377 to 393 (SNERTHNGNRANKDANN) show a composition bias toward basic and acidic residues. Residues 406 to 415 (NSINNTNYYS) are compositionally biased toward low complexity. Residue Ser-457 is the site of GPI-anchor amidated serine attachment. The propeptide at 458 to 480 (SSYYEVFNYFSIAFILIIHMLLL) is removed in mature form.

The protein resides in the cell surface. It is found in the cell membrane. Involved in sporozoite infection of hepatocytes and replication therein. This chain is Sporozoite surface protein P36p (P52), found in Plasmodium yoelii yoelii.